Reading from the N-terminus, the 513-residue chain is ATP synthase subunit alpha (513 aa).

Residue 169–176 (GDRQIGKS) coordinates ATP.

The protein belongs to the ATPase alpha/beta chains family. F-type ATPases have 2 components, CF(1) - the catalytic core - and CF(0) - the membrane proton channel. CF(1) has five subunits: alpha(3), beta(3), gamma(1), delta(1), epsilon(1). CF(0) has three main subunits: a(1), b(2) and c(9-12). The alpha and beta chains form an alternating ring which encloses part of the gamma chain. CF(1) is attached to CF(0) by a central stalk formed by the gamma and epsilon chains, while a peripheral stalk is formed by the delta and b chains.

The protein localises to the cell inner membrane. It catalyses the reaction ATP + H2O + 4 H(+)(in) = ADP + phosphate + 5 H(+)(out). Produces ATP from ADP in the presence of a proton gradient across the membrane. The alpha chain is a regulatory subunit. The polypeptide is ATP synthase subunit alpha (Colwellia psychrerythraea (strain 34H / ATCC BAA-681) (Vibrio psychroerythus)).